The chain runs to 521 residues: GMP synthase [glutamine-hydrolyzing] (521 aa).

The Glutamine amidotransferase type-1 domain maps to 5–197 (KILILDFGSQ…VLDICGAQPG (193 aa)). C81 acts as the Nucleophile in catalysis. Residues H171 and E173 contribute to the active site. Positions 198–390 (WTMPNYIEEA…LGLPREMVYR (193 aa)) constitute a GMPS ATP-PPase domain. 225-231 (SGGVDSS) lines the ATP pocket.

As to quaternary structure, homodimer.

The catalysed reaction is XMP + L-glutamine + ATP + H2O = GMP + L-glutamate + AMP + diphosphate + 2 H(+). It participates in purine metabolism; GMP biosynthesis; GMP from XMP (L-Gln route): step 1/1. Catalyzes the synthesis of GMP from XMP. In Neisseria meningitidis serogroup C (strain 053442), this protein is GMP synthase [glutamine-hydrolyzing].